The chain runs to 440 residues: Trigger factor (440 aa).

The 97-residue stretch at 161–257 folds into the PPIase FKBP-type domain; the sequence is GDYVKLAYEG…VLEVRERVLP (97 aa).

It belongs to the FKBP-type PPIase family. Tig subfamily.

It is found in the cytoplasm. The enzyme catalyses [protein]-peptidylproline (omega=180) = [protein]-peptidylproline (omega=0). In terms of biological role, involved in protein export. Acts as a chaperone by maintaining the newly synthesized protein in an open conformation. Functions as a peptidyl-prolyl cis-trans isomerase. The polypeptide is Trigger factor (Opitutus terrae (strain DSM 11246 / JCM 15787 / PB90-1)).